Consider the following 695-residue polypeptide: MSRGISTFRNIGISAHIDSGKTTLSERILFYCDRIHAIHEVRGKDGVGATMDNMELERERGITIQSASTQVQWKGHTINVIDTPGHVDFTIEVERSLRVLDGAVLVLCSVAGVQSQSITVDRQLRRYHVPRISFINKCDRTGANPFKVCAQLREKLSLNAHLMQLPIGLEDRLEGVIDLISLKALYFEGESGAHVREAPIPEQYQADVKKYRDELIDAASLFSDELAEAYLEGTETDQLIRAAVRAGTIAEKFVPVFCGSAYKNKGIQPLLDAITYYLPDPTEVTNTALDLDRAEEPVTLSTDADAPVVALGFKLEDGKYGQLTYVRVYQGTIKKGAELFNVRARKKFKVGRLVRMNSNQMEDISEGTPGDIVALFGVDCASGDTFCSGDLNYAMTSMFVPEPVISLSITPKDKRSADQVSKALNRFTKEDPTFRSFVDPESNQTIIQGMGELHLDVYIERMRREYKCEVETGMPQVAYREAISARADFNYTHKKQTGGSGQFGRVAGFIEPIAGQDYEFVDQIKGGVIPNEFIPSCDKGFRTAVKKGTLIGFPIVGVRVTINDGQSHPVDSSDMAFQAAAIGAFREAYNGAKPVVLEPIMRVSVEGPQEFQGSVFGLINQRRGVVVSSADDEQFSRVDAEVPLSEMFGFSTVLRSSTQGKAEYSMEFAKYGKAPQGVTDSLIKEYQEKRKAEQR.

Residues 6–282 form the tr-type G domain; it reads STFRNIGISA…AITYYLPDPT (277 aa). GTP-binding positions include 15-22, 82-86, and 136-139; these read AHIDSGKT, DTPGH, and NKCD.

This sequence belongs to the TRAFAC class translation factor GTPase superfamily. Classic translation factor GTPase family. EF-G/EF-2 subfamily.

It localises to the cytoplasm. Functionally, catalyzes the GTP-dependent ribosomal translocation step during translation elongation. During this step, the ribosome changes from the pre-translocational (PRE) to the post-translocational (POST) state as the newly formed A-site-bound peptidyl-tRNA and P-site-bound deacylated tRNA move to the P and E sites, respectively. Catalyzes the coordinated movement of the two tRNA molecules, the mRNA and conformational changes in the ribosome. The sequence is that of Elongation factor G 1 (fusA) from Treponema pallidum (strain Nichols).